We begin with the raw amino-acid sequence, 352 residues long: Probable RNA methyltransferase Mpe_A3613 (352 aa).

The Proton acceptor role is filled by Glu88. The Radical SAM core domain maps to 91 to 317 (LLPRDGLCVS…TKLRRSAGQD (227 aa)). Residues Cys98 and Cys322 are joined by a disulfide bond. [4Fe-4S] cluster contacts are provided by Cys105, Cys109, and Cys112. Residues 150–151 (GE), Ser180, 203–205 (SLH), and Asn279 each bind S-adenosyl-L-methionine. The active-site S-methylcysteine intermediate is Cys322.

The protein belongs to the radical SAM superfamily. RlmN family. Requires [4Fe-4S] cluster as cofactor.

The protein localises to the cytoplasm. The sequence is that of Probable RNA methyltransferase Mpe_A3613 from Methylibium petroleiphilum (strain ATCC BAA-1232 / LMG 22953 / PM1).